Reading from the N-terminus, the 254-residue chain is NFU1 iron-sulfur cluster scaffold homolog, mitochondrial (254 aa).

The transit peptide at 1 to 9 (MAATARRGW) directs the protein to the mitochondrion. The interval 173 to 241 (IKELLDTRIR…IPEVEGVEQV (69 aa)) is nifU. Residues Cys210 and Cys213 each coordinate [4Fe-4S] cluster.

This sequence belongs to the NifU family. Monomer and homohexamer; the apo-NFU1 is a monomer, while the holo-NFU1 is a hexamer composed of a trimer of dimer that is probably linked by some 4Fe-4S cluster. Interacts with HIRA and EPM2A/laforin. Interacts with BOLA3. Interacts with HSPA9. As to expression, ubiquitous. Expression in adult lung is weak compared to fetal lung.

It is found in the mitochondrion. It localises to the cytoplasm. Its subcellular location is the cytosol. Functionally, iron-sulfur cluster scaffold protein which can assemble [4Fe-4S] clusters and deliver them to target proteins. The sequence is that of NFU1 iron-sulfur cluster scaffold homolog, mitochondrial (NFU1) from Homo sapiens (Human).